The primary structure comprises 236 residues: uncharacterized protein (236 aa).

The first 24 residues, 1 to 24, serve as a signal peptide directing secretion; the sequence is MRKKHFNMILKLALISSLLALAAS. Asparagine 59, asparagine 171, and asparagine 197 each carry an N-linked (GlcNAc...) asparagine glycan.

Its subcellular location is the secreted. This is an uncharacterized protein from Caenorhabditis elegans.